Consider the following 368-residue polypeptide: Probable magnesium transporter NIPA3 (368 aa).

Residues 1–18 are Extracellular-facing; it reads MASLSGSWRDAYKGMSSD. A helical transmembrane segment spans residues 19-39; that stretch reads NIKGLVLALSSSLFIGASFIV. Topologically, residues 40 to 66 are cytoplasmic; it reads KKKGLKRAGASGLRAGSGGYSYLLEPL. The helical transmembrane segment at 67-87 threads the bilayer; sequence WWVGMITMIVGEIANFAAYAF. The Extracellular segment spans residues 88 to 90; the sequence is APA. A helical transmembrane segment spans residues 91 to 111; the sequence is ILVTPLGALSIIISAALAHVI. Over 112 to 115 the chain is Cytoplasmic; sequence LHEK. The chain crosses the membrane as a helical span at residues 116–136; that stretch reads LHTFGLLGCVLCVVGSITIVL. Residues 137–157 lie on the Extracellular side of the membrane; it reads HAPQEQEIDSVLQVWNLATEP. The helical transmembrane segment at 158 to 178 threads the bilayer; that stretch reads AFLLYAAAVVGAAIILIVQFV. The Cytoplasmic segment spans residues 179-189; it reads PQYGQSHVMVY. Residues 190–210 form a helical membrane-spanning segment; that stretch reads IGVCSLVGSLSVMSVKALGIA. Over 211 to 220 the chain is Extracellular; sequence LKLTFSGMNQ. A helical transmembrane segment spans residues 221–241; sequence LIYPQTWVFTLIVLTCVITQM. The Cytoplasmic segment spans residues 242-255; the sequence is NYLNKALDTFNTAV. Residues 256–276 traverse the membrane as a helical segment; sequence VSPIYYVMFTSLTILASVIMF. Residues 277–283 lie on the Extracellular side of the membrane; the sequence is KDWDRQD. A helical membrane pass occupies residues 284–304; it reads GTQIVTELCGFVTILSGTFLL. The Cytoplasmic segment spans residues 305 to 368; it reads HKTKDMVDGS…ILPQDGPEAV (64 aa).

It belongs to the NIPA (TC 2.A.7) family. In terms of assembly, homodimer.

The protein localises to the cell membrane. Its subcellular location is the early endosome. Functionally, acts as a Mg(2+) transporter. Can also transport other divalent cations such as Fe(2+), Sr(2+), Ba(2+), Mn(2+) and Co(2+) but to a much less extent than Mg(2+). This is Probable magnesium transporter NIPA3 from Arabidopsis thaliana (Mouse-ear cress).